The primary structure comprises 330 residues: RNA polymerase sigma factor RpoS (330 aa).

The sigma-70 factor domain-1 stretch occupies residues 56–89 (DATQLYLGEIGYSPLLTAEEEVYFARRALRGDVA). Residues 94–164 (MIESNLRLVV…ERAIMNQTRT (71 aa)) are sigma-70 factor domain-2. An Interaction with polymerase core subunit RpoC motif is present at residues 118–121 (DLIE). The sigma-70 factor domain-3 stretch occupies residues 174 to 249 (ELNVYLRTAR…DEKENGPEDT (76 aa)). The segment at 262–315 (WLFELNAKQREVLARRFGLLGYEAATLEDVGREIGLTRERVRQIQVEGLRRLRE) is sigma-70 factor domain-4. Positions 288-307 (LEDVGREIGLTRERVRQIQV) form a DNA-binding region, H-T-H motif.

This sequence belongs to the sigma-70 factor family. RpoS subfamily. In terms of assembly, interacts with the RNA polymerase core enzyme and RssB.

The protein localises to the cytoplasm. In terms of biological role, sigma factors are initiation factors that promote the attachment of RNA polymerase to specific initiation sites and are then released. This sigma factor is the master transcriptional regulator of the stationary phase and the general stress response. Controls, positively or negatively, the expression of several hundred genes, which are mainly involved in metabolism, transport, regulation and stress management. Functionally, protects stationary phase cells from killing induced by endoribonuclease MazF. This chain is RNA polymerase sigma factor RpoS, found in Escherichia coli (strain K12).